Reading from the N-terminus, the 229-residue chain is Large ribosomal subunit protein uL1 (229 aa).

Belongs to the universal ribosomal protein uL1 family. Part of the 50S ribosomal subunit.

Functionally, binds directly to 23S rRNA. The L1 stalk is quite mobile in the ribosome, and is involved in E site tRNA release. In terms of biological role, protein L1 is also a translational repressor protein, it controls the translation of the L11 operon by binding to its mRNA. This is Large ribosomal subunit protein uL1 from Streptococcus uberis (strain ATCC BAA-854 / 0140J).